A 466-amino-acid polypeptide reads, in one-letter code: cGMP-specific 3',5'-cGMP phosphodiesterase 3 (466 aa).

Low complexity predominate over residues Met1–Asn120. Positions Met1–Asp150 are disordered. Residues Asp123–Asn134 are compositionally biased toward acidic residues. Over residues Asn135–Asp150 the composition is skewed to low complexity. One can recognise a PDEase domain in the interval Asn137–Ser458. The Proton donor role is filled by His213. His217, His253, Asp254, and Asp364 together coordinate a divalent metal cation.

Belongs to the cyclic nucleotide phosphodiesterase family. Requires a divalent metal cation as cofactor.

It localises to the cytoplasm. Its subcellular location is the cytosol. It catalyses the reaction 3',5'-cyclic GMP + H2O = GMP + H(+). Inhibited by 3-isobutyl-1-methylxanthine (IBMX). Phosphodiesterase specific for cGMP, which is not activated by cGMP. Involved in the degradation of intracellular cGMP. In Dictyostelium discoideum (Social amoeba), this protein is cGMP-specific 3',5'-cGMP phosphodiesterase 3 (pde3).